The sequence spans 578 residues: Proline--tRNA ligase (578 aa).

It belongs to the class-II aminoacyl-tRNA synthetase family. ProS type 1 subfamily. Homodimer.

The protein localises to the cytoplasm. The catalysed reaction is tRNA(Pro) + L-proline + ATP = L-prolyl-tRNA(Pro) + AMP + diphosphate. Catalyzes the attachment of proline to tRNA(Pro) in a two-step reaction: proline is first activated by ATP to form Pro-AMP and then transferred to the acceptor end of tRNA(Pro). As ProRS can inadvertently accommodate and process non-cognate amino acids such as alanine and cysteine, to avoid such errors it has two additional distinct editing activities against alanine. One activity is designated as 'pretransfer' editing and involves the tRNA(Pro)-independent hydrolysis of activated Ala-AMP. The other activity is designated 'posttransfer' editing and involves deacylation of mischarged Ala-tRNA(Pro). The misacylated Cys-tRNA(Pro) is not edited by ProRS. The protein is Proline--tRNA ligase of Burkholderia orbicola (strain AU 1054).